Here is a 1054-residue protein sequence, read N- to C-terminus: DIS3-like exonuclease 1 (1054 aa).

The CSD1 domain occupies 236-309 (AGIKSGRYIQ…PKNEWKGRTV (74 aa)). One can recognise a CSD2 domain in the interval 365 to 431 (ILVTPWDYRI…GEIATILVEN (67 aa)). Positions 465 to 816 (RKDLRKSHLV…VHRLLMAAIS (352 aa)) constitute an RNB domain. Ser-989 carries the post-translational modification Phosphoserine.

It belongs to the RNR ribonuclease family. In terms of assembly, component of the RNA exosome complex. The catalytically inactive RNA exosome core (Exo-9) complex is believed to associate with catalytic subunits EXOSC10, and DIS3 or DIS3L in cytoplasmic- and nuclear-specific RNA exosome complex forms. Mg(2+) is required as a cofactor.

The protein resides in the cytoplasm. The enzyme catalyses Exonucleolytic cleavage in the 3'- to 5'-direction to yield nucleoside 5'-phosphates.. In terms of biological role, catalytic component of the RNA exosome complex which has 3'-&gt;5' exoribonuclease activity and participates in a multitude of cellular RNA processing and degradation events. In the cytoplasm, the RNA exosome complex is involved in general mRNA turnover and specifically degrades inherently unstable mRNAs containing AU-rich elements (AREs) within their 3' untranslated regions, and in RNA surveillance pathways, preventing translation of aberrant mRNAs. It seems to be involved in degradation of histone mRNA. The sequence is that of DIS3-like exonuclease 1 (DIS3L) from Homo sapiens (Human).